The chain runs to 875 residues: uncharacterized protein (875 aa).

Residues 83–149 (PFQPPPPQPF…QPPQPPPQQL (67 aa)) are disordered. The segment covering 101 to 147 (QQPPQPPPDQPQQPQPPQQPPQQPPQQQPQPPQPPQQPPQPPQPPPQ) has biased composition (pro residues).

This is an uncharacterized protein from Orgyia pseudotsugata multicapsid polyhedrosis virus (OpMNPV).